A 332-amino-acid polypeptide reads, in one-letter code: UPF0194 membrane protein YbhG (332 aa).

A signal peptide spans 1–16 (MMKKPVVIGLAVVVLA). The stretch at 107–209 (NEEIAQAAAA…LNLQDSTLIA (103 aa)) forms a coiled coil.

It belongs to the UPF0194 family.

The protein resides in the periplasm. The sequence is that of UPF0194 membrane protein YbhG from Escherichia coli (strain K12 / MC4100 / BW2952).